The primary structure comprises 378 residues: Chorismate synthase (378 aa).

A disordered region spans residues I42–Q61. Position 49 (R49) interacts with NADP(+). Residues R126–S128, G287, K302–T306, and R328 each bind FMN.

It belongs to the chorismate synthase family. In terms of assembly, homotetramer. Requires FMNH2 as cofactor.

The catalysed reaction is 5-O-(1-carboxyvinyl)-3-phosphoshikimate = chorismate + phosphate. Its pathway is metabolic intermediate biosynthesis; chorismate biosynthesis; chorismate from D-erythrose 4-phosphate and phosphoenolpyruvate: step 7/7. Its function is as follows. Catalyzes the anti-1,4-elimination of the C-3 phosphate and the C-6 proR hydrogen from 5-enolpyruvylshikimate-3-phosphate (EPSP) to yield chorismate, which is the branch point compound that serves as the starting substrate for the three terminal pathways of aromatic amino acid biosynthesis. This reaction introduces a second double bond into the aromatic ring system. The sequence is that of Chorismate synthase from Synechococcus sp. (strain JA-2-3B'a(2-13)) (Cyanobacteria bacterium Yellowstone B-Prime).